Consider the following 336-residue polypeptide: Ribose-phosphate pyrophosphokinase 1 (336 aa).

The Mg(2+) site is built by D150, H152, D161, and D165. Residues 236–251 are binding of phosphoribosylpyrophosphate; the sequence is GKVAVMVDDMIDTAGT.

The protein belongs to the ribose-phosphate pyrophosphokinase family.

The catalysed reaction is D-ribose 5-phosphate + ATP = 5-phospho-alpha-D-ribose 1-diphosphate + AMP + H(+). The protein is Ribose-phosphate pyrophosphokinase 1 (PRS1) of Spinacia oleracea (Spinach).